Reading from the N-terminus, the 946-residue chain is Inter-alpha-trypsin inhibitor heavy chain H2 (946 aa).

Positions 1-18 are cleaved as a signal peptide; it reads MQRLACVLIWLFLLEEQA. A propeptide spanning residues 19–54 is cleaved from the precursor; the sequence is FEIPANEYSEFAGYSNLVELAPDKFPFVQENRRYQR. One can recognise a VIT domain in the interval 56-185; the sequence is LPEESGEMTD…KVQFELHYQE (130 aa). At S60 the chain carries Phosphoserine. N118 and N263 each carry an N-linked (GlcNAc...) asparagine glycan. 2 positions are modified to 4-carboxyglutamate: E282 and E283. The 161-residue stretch at 308-468 folds into the VWFA domain; it reads PKNILFVIDV…YDFLKRLSNE (161 aa). N-linked (GlcNAc...) asparagine glycosylation occurs at N445. Position 466 is a phosphoserine (S466). N578 carries an N-linked (GlcNAc...) asparagine glycan. Aspartate 1-(chondroitin 4-sulfate)-ester is present on D702. Residues 703-946 constitute a propeptide that is removed on maturation; that stretch reads PHFIIYLPKS…PQLYSFLKRP (244 aa). S886 is modified (phosphoserine).

The protein belongs to the ITIH family. I-alpha-I plasma protease inhibitors are assembled from one or two heavy chains (HC) and one light chain, bikunin. Inter-alpha-inhibitor (I-alpha-I) is composed of ITIH1/HC1, ITIH2/HC2 and bikunin. In terms of processing, heavy chains are linked to bikunin via chondroitin 4-sulfate esterified to the alpha-carboxyl of the C-terminal aspartate after propeptide cleavage. Phosphorylated by FAM20C in the extracellular medium.

The protein resides in the secreted. May act as a carrier of hyaluronan in serum or as a binding protein between hyaluronan and other matrix protein, including those on cell surfaces in tissues to regulate the localization, synthesis and degradation of hyaluronan which are essential to cells undergoing biological processes. The chain is Inter-alpha-trypsin inhibitor heavy chain H2 (ITIH2) from Mesocricetus auratus (Golden hamster).